We begin with the raw amino-acid sequence, 313 residues long: Ribosomal RNA small subunit methyltransferase H (313 aa).

S-adenosyl-L-methionine is bound by residues 35–37 (GGH), aspartate 55, phenylalanine 79, aspartate 100, and glutamine 107.

Belongs to the methyltransferase superfamily. RsmH family.

It localises to the cytoplasm. It catalyses the reaction cytidine(1402) in 16S rRNA + S-adenosyl-L-methionine = N(4)-methylcytidine(1402) in 16S rRNA + S-adenosyl-L-homocysteine + H(+). Its function is as follows. Specifically methylates the N4 position of cytidine in position 1402 (C1402) of 16S rRNA. The sequence is that of Ribosomal RNA small subunit methyltransferase H from Burkholderia ambifaria (strain ATCC BAA-244 / DSM 16087 / CCUG 44356 / LMG 19182 / AMMD) (Burkholderia cepacia (strain AMMD)).